The primary structure comprises 322 residues: Mitochondrial glutamate carrier 1 (322 aa).

3 Solcar repeats span residues 6–93 (ISLP…FRYQ), 101–214 (LTLF…LNEL), and 223–312 (SPFY…GIAE). The next 6 membrane-spanning stretches (helical) occupy residues 12-32 (LINGGIAGLIGVTCVFPIDLA), 62-82 (YFGMYRGAAVNLTLVTPEKAI), 107-127 (MLAGCGAGTCQVIVTTPMEML), 189-209 (GLGATLLRDVPFSIVYFPLFA), 223-243 (SPFYVSFLAGCVAGSAAAVAV), and 292-312 (ALVIAPLFGIAQVVYFLGIAE).

The protein belongs to the mitochondrial carrier (TC 2.A.29) family.

The protein resides in the mitochondrion inner membrane. The enzyme catalyses L-glutamate(in) + H(+)(in) = L-glutamate(out) + H(+)(out). Its function is as follows. Mitochondrial glutamate/H(+) symporter. Responsible for the transport of glutamate from the cytosol into the mitochondrial matrix with the concomitant import of a proton. Plays a role in the control of glucose-stimulated insulin secretion. The chain is Mitochondrial glutamate carrier 1 (SLC25A22) from Bos taurus (Bovine).